The primary structure comprises 501 residues: Nuclear receptor subfamily 5 group A member 2 (501 aa).

A DNA-binding region (nuclear receptor) is located at residues 43-114 (EELCPVCGDK…KCLSVGMKLE (72 aa)). Cysteine 46, cysteine 49, cysteine 63, cysteine 66, cysteine 82, cysteine 88, cysteine 98, and cysteine 101 together coordinate Zn(2+). NR C4-type zinc fingers lie at residues 46-66 (CPVC…CESC) and 82-106 (CIEN…FQKC). Residues 112-127 (KLEAVRADRMRGGRNK) are C-terminal extension (CTE). Positions 128–147 (FGPMYKRDRALKQQKKALIR) match the FTZ-F1 box motif. The segment at 186–207 (NHTALPPTDYDRSPFVTSPISM) is disordered. The 240-residue stretch at 260-499 (SIPHLILELQ…NLLIEMLHAK (240 aa)) folds into the NR LBD domain. Residues 381–384 (GATL), tyrosine 476, and lysine 480 each bind a phospholipid derivative. Residues 488-499 (CNNLLIEMLHAK) are AF-2.

The protein belongs to the nuclear hormone receptor family. NR5 subfamily. As to quaternary structure, monomer; Binds DNA as a monomer. As to expression, detected in liver and adrenal gland.

It localises to the nucleus. The protein resides in the chromosome. Functionally, orphan nuclear receptor that binds DNA as a monomer to the 5'-TCAAGGCCA-3' sequence and controls expression of target genes: regulates key biological processes, such as cholesterol and bile acid synthesis pathways, as well as cartilage, liver and pancreas morphogenesis. Ligand-binding causes conformational change which causes recruitment of coactivators, promoting target gene activation. The specific ligand is unknown, but specific phospholipids, such as phosphatidylethanolamine, phosphatidylserine, dilauroyl phosphatidylcholine and diundecanoyl phosphatidylcholine can act as ligand in vitro. Acts as a pioneer transcription factor, which unwraps target DNA from histones and elicits local opening of closed chromatin. Involved in the formation of connective tissue in lower jaw. This is Nuclear receptor subfamily 5 group A member 2 from Gallus gallus (Chicken).